Here is a 458-residue protein sequence, read N- to C-terminus: Argininosuccinate lyase (458 aa).

The protein belongs to the lyase 1 family. Argininosuccinate lyase subfamily.

The protein localises to the cytoplasm. The enzyme catalyses 2-(N(omega)-L-arginino)succinate = fumarate + L-arginine. It functions in the pathway amino-acid biosynthesis; L-arginine biosynthesis; L-arginine from L-ornithine and carbamoyl phosphate: step 3/3. The protein is Argininosuccinate lyase of Salmonella typhi.